Here is a 252-residue protein sequence, read N- to C-terminus: Diphthine synthase (252 aa).

S-adenosyl-L-methionine-binding positions include leucine 9, aspartate 85, valine 88, 113–114 (SI), leucine 165, alanine 202, and histidine 227.

The protein belongs to the diphthine synthase family. As to quaternary structure, homodimer.

The catalysed reaction is 2-[(3S)-amino-3-carboxypropyl]-L-histidyl-[translation elongation factor 2] + 3 S-adenosyl-L-methionine = diphthine-[translation elongation factor 2] + 3 S-adenosyl-L-homocysteine + 3 H(+). The protein operates within protein modification; peptidyl-diphthamide biosynthesis. Functionally, S-adenosyl-L-methionine-dependent methyltransferase that catalyzes the trimethylation of the amino group of the modified target histidine residue in translation elongation factor 2 (EF-2), to form an intermediate called diphthine. The three successive methylation reactions represent the second step of diphthamide biosynthesis. The chain is Diphthine synthase from Methanospirillum hungatei JF-1 (strain ATCC 27890 / DSM 864 / NBRC 100397 / JF-1).